A 256-amino-acid chain; its full sequence is tRNA pseudouridine synthase A (256 aa).

Asp-43 functions as the Nucleophile in the catalytic mechanism. Tyr-94 is a substrate binding site.

The protein belongs to the tRNA pseudouridine synthase TruA family.

It carries out the reaction uridine(38/39/40) in tRNA = pseudouridine(38/39/40) in tRNA. In terms of biological role, formation of pseudouridine at positions 38, 39 and 40 in the anticodon stem and loop of transfer RNAs. In Pyrobaculum aerophilum (strain ATCC 51768 / DSM 7523 / JCM 9630 / CIP 104966 / NBRC 100827 / IM2), this protein is tRNA pseudouridine synthase A.